The chain runs to 396 residues: Elongation factor Tu (396 aa).

One can recognise a tr-type G domain in the interval 11 to 205 (KPHVNIGTIG…VIDDYIPTPK (195 aa)). The G1 stretch occupies residues 20-27 (GHVDHGKT). A GTP-binding site is contributed by 20-27 (GHVDHGKT). Residue Thr-27 participates in Mg(2+) binding. Positions 61-65 (GITIN) are G2. The segment at 82–85 (DAPG) is G3. GTP is bound by residues 82-86 (DAPGH) and 137-140 (NKTD). The tract at residues 137–140 (NKTD) is G4. Residues 175–177 (SAL) form a G5 region.

It belongs to the TRAFAC class translation factor GTPase superfamily. Classic translation factor GTPase family. EF-Tu/EF-1A subfamily. As to quaternary structure, monomer.

It localises to the cytoplasm. The enzyme catalyses GTP + H2O = GDP + phosphate + H(+). GTP hydrolase that promotes the GTP-dependent binding of aminoacyl-tRNA to the A-site of ribosomes during protein biosynthesis. This chain is Elongation factor Tu, found in Limosilactobacillus reuteri (strain DSM 20016) (Lactobacillus reuteri).